A 338-amino-acid chain; its full sequence is Ferredoxin--NADP reductase (338 aa).

Threonine 14, aspartate 33, glutamine 41, tyrosine 46, valine 86, phenylalanine 120, aspartate 284, and threonine 325 together coordinate FAD.

Belongs to the ferredoxin--NADP reductase type 2 family. Homodimer. It depends on FAD as a cofactor.

It carries out the reaction 2 reduced [2Fe-2S]-[ferredoxin] + NADP(+) + H(+) = 2 oxidized [2Fe-2S]-[ferredoxin] + NADPH. This Pelagibacter ubique (strain HTCC1062) protein is Ferredoxin--NADP reductase.